The following is a 362-amino-acid chain: Adenosine deaminase (362 aa).

H19 and H21 together coordinate Zn(2+). H21, D23, and G181 together coordinate substrate. H208 serves as a coordination point for Zn(2+). The active-site Proton donor is the E211. Residue D300 coordinates Zn(2+).

It belongs to the metallo-dependent hydrolases superfamily. Adenosine and AMP deaminases family. Adenosine deaminase subfamily. Requires Zn(2+) as cofactor.

The enzyme catalyses adenosine + H2O + H(+) = inosine + NH4(+). It catalyses the reaction 2'-deoxyadenosine + H2O + H(+) = 2'-deoxyinosine + NH4(+). In terms of biological role, catalyzes the hydrolytic deamination of adenosine and 2-deoxyadenosine. The sequence is that of Adenosine deaminase from Mycobacterium ulcerans (strain Agy99).